A 422-amino-acid polypeptide reads, in one-letter code: Protein krasavietz (422 aa).

Residues 1-26 (MSQKTERPVLSGQRIKTRKRDEREKY) are disordered. Residues 244–415 (KLHKAQASQE…QSAEEESESE (172 aa)) enclose the W2 domain. A phosphoserine mark is found at Ser407, Ser412, and Ser414.

It belongs to the BZW family. As to expression, expressed in mushroom bodies.

Its function is as follows. May be involved in memory formation. This Drosophila melanogaster (Fruit fly) protein is Protein krasavietz (kra).